A 230-amino-acid chain; its full sequence is Somatolactin (230 aa).

The signal sequence occupies residues 1 to 23 (MIKTKVLQAWMGIWLCAVNGLLG). 3 disulfide bridges follow: cysteine 28/cysteine 38, cysteine 87/cysteine 202, and cysteine 219/cysteine 227. An N-linked (GlcNAc...) asparagine glycan is attached at asparagine 177.

Belongs to the somatotropin/prolactin family.

The protein localises to the secreted. The sequence is that of Somatolactin from Ictalurus punctatus (Channel catfish).